The sequence spans 336 residues: Zinc transporter ZIP11 (336 aa).

A run of 7 helical transmembrane segments spans residues 12 to 32 (LLGTLLTWGLTAAGSALVFIF), 44 to 64 (LGFAAGVMLAASYWSLLAPAI), 75 to 95 (SFAFVPAAVGFLVGAGFVYLA), 188 to 208 (IMLLILAITIHNIPEGLAVGV), 258 to 278 (WYGQLSGMVEPIAGLLGTIAI), 280 to 300 (LAEPLLPYALAFAAGAMVYVV), and 316 to 336 (LASWTCIFGFIVMMSLDVGLG).

The protein belongs to the ZIP transporter (TC 2.A.5) family.

Its subcellular location is the cell membrane. It localises to the nucleus. The protein localises to the cytoplasm. The protein resides in the golgi apparatus. Functions as a cellular zinc transporter. This Xenopus tropicalis (Western clawed frog) protein is Zinc transporter ZIP11 (slc39a11).